A 449-amino-acid chain; its full sequence is UPF0761 membrane protein Cpha266_1653 (449 aa).

The next 6 membrane-spanning stretches (helical) occupy residues 77 to 97 (LLSL…FPVF), 133 to 153 (SVPL…ISTI), 173 to 193 (FTLY…SLVA), 214 to 234 (LLSF…YMLV), 244 to 264 (AVYG…WFVF), and 277 to 297 (GALS…VVVL).

Belongs to the UPF0761 family.

It localises to the cell inner membrane. This chain is UPF0761 membrane protein Cpha266_1653, found in Chlorobium phaeobacteroides (strain DSM 266 / SMG 266 / 2430).